The following is a 415-amino-acid chain: UDP-N-acetylglucosamine 1-carboxyvinyltransferase 1 (415 aa).

Lysine 23–asparagine 24 provides a ligand contact to phosphoenolpyruvate. Arginine 92 serves as a coordination point for UDP-N-acetyl-alpha-D-glucosamine. Catalysis depends on cysteine 116, which acts as the Proton donor. Cysteine 116 carries the 2-(S-cysteinyl)pyruvic acid O-phosphothioketal modification. UDP-N-acetyl-alpha-D-glucosamine is bound by residues arginine 121 to leucine 125, aspartate 304, and valine 326.

This sequence belongs to the EPSP synthase family. MurA subfamily.

Its subcellular location is the cytoplasm. It catalyses the reaction phosphoenolpyruvate + UDP-N-acetyl-alpha-D-glucosamine = UDP-N-acetyl-3-O-(1-carboxyvinyl)-alpha-D-glucosamine + phosphate. It functions in the pathway cell wall biogenesis; peptidoglycan biosynthesis. Cell wall formation. Adds enolpyruvyl to UDP-N-acetylglucosamine. This chain is UDP-N-acetylglucosamine 1-carboxyvinyltransferase 1, found in Caldanaerobacter subterraneus subsp. tengcongensis (strain DSM 15242 / JCM 11007 / NBRC 100824 / MB4) (Thermoanaerobacter tengcongensis).